Here is a 303-residue protein sequence, read N- to C-terminus: Archaeosortase A (303 aa).

The next 7 membrane-spanning stretches (helical) occupy residues 3 to 23, 36 to 56, 60 to 80, 93 to 113, 169 to 189, 200 to 220, and 259 to 279; these read GLLS…GAVA, TAAW…FTLV, YIEG…GWLL, AVAA…FTLL, VVLA…IAAV, LAIA…FIAI, and LAVV…PELL. The active-site Acyl-thioester intermediate is Cys173. Catalysis depends on Arg214, which acts as the Proton donor.

The protein belongs to the exosortase/archaeosortase family. Archaeosortase A subfamily.

It localises to the cell membrane. In terms of biological role, transpeptidase that recognizes and modifies its substrate by proteolytic cleavage of a sorting signal. Following cleavage, a covalent intermediate is formed via a thioester bond between the archaeosortase and its substrate, which is then transferred and covalently attached to the cell membrane. This sortase recognizes a tripartite structure consisting of a conserved Pro-Gly-Phe (PGF) motif, followed by a transmembrane alpha helix domain and a cluster of basic residues, usually at the C-terminus of target proteins. Confirmed substrates include the cell surface S-layer glycoprotein Csg and HVO_0405. ArtA is required for the C-terminal processing of Csg and for its lipidation and attachment to the archaeal plasma membrane. It is also required for the processing of HVO_0405, which contains an atypical central tripartite structure. The sequence is that of Archaeosortase A from Haloferax volcanii (strain ATCC 29605 / DSM 3757 / JCM 8879 / NBRC 14742 / NCIMB 2012 / VKM B-1768 / DS2) (Halobacterium volcanii).